Consider the following 466-residue polypeptide: Histidine--tRNA ligase (466 aa).

The protein belongs to the class-II aminoacyl-tRNA synthetase family. Homodimer.

The protein localises to the cytoplasm. It catalyses the reaction tRNA(His) + L-histidine + ATP = L-histidyl-tRNA(His) + AMP + diphosphate + H(+). This is Histidine--tRNA ligase from Bifidobacterium longum subsp. infantis (strain ATCC 15697 / DSM 20088 / JCM 1222 / NCTC 11817 / S12).